The chain runs to 278 residues: Putative phosphatase MG265 (278 aa).

Catalysis depends on Asp9, which acts as the Nucleophile. Asp9 serves as a coordination point for Mg(2+). Position 10 (Leu10) interacts with phosphate. Asp11 is a binding site for Mg(2+). Phosphate is bound by residues 43–44 and Lys204; that span reads SG. Asp227 contributes to the Mg(2+) binding site. Asn230 provides a ligand contact to phosphate.

This sequence belongs to the HAD-like hydrolase superfamily. Cof family. Mg(2+) is required as a cofactor.

This chain is Putative phosphatase MG265, found in Mycoplasma genitalium (strain ATCC 33530 / DSM 19775 / NCTC 10195 / G37) (Mycoplasmoides genitalium).